A 130-amino-acid chain; its full sequence is Fluoride-specific ion channel FluC (130 aa).

4 consecutive transmembrane segments (helical) span residues 3–23 (FVFL…YFVG), 38–58 (LGTF…GHLA), 67–87 (FGIF…SYGL), and 102–122 (ISYV…GWFL). 2 residues coordinate Na(+): G77 and T80.

Belongs to the fluoride channel Fluc/FEX (TC 1.A.43) family.

The protein localises to the cell inner membrane. It catalyses the reaction fluoride(in) = fluoride(out). With respect to regulation, na(+) is not transported, but it plays an essential structural role and its presence is essential for fluoride channel function. In terms of biological role, fluoride-specific ion channel. Important for reducing fluoride concentration in the cell, thus reducing its toxicity. This Helicobacter pylori (strain G27) protein is Fluoride-specific ion channel FluC.